The chain runs to 329 residues: Lipoyl synthase (329 aa).

7 residues coordinate [4Fe-4S] cluster: Cys-55, Cys-60, Cys-66, Cys-81, Cys-85, Cys-88, and Ser-292. In terms of domain architecture, Radical SAM core spans 67 to 281 (WEDREATFLI…RDEAEAIGFL (215 aa)).

It belongs to the radical SAM superfamily. Lipoyl synthase family. It depends on [4Fe-4S] cluster as a cofactor.

The protein resides in the cytoplasm. The catalysed reaction is [[Fe-S] cluster scaffold protein carrying a second [4Fe-4S](2+) cluster] + N(6)-octanoyl-L-lysyl-[protein] + 2 oxidized [2Fe-2S]-[ferredoxin] + 2 S-adenosyl-L-methionine + 4 H(+) = [[Fe-S] cluster scaffold protein] + N(6)-[(R)-dihydrolipoyl]-L-lysyl-[protein] + 4 Fe(3+) + 2 hydrogen sulfide + 2 5'-deoxyadenosine + 2 L-methionine + 2 reduced [2Fe-2S]-[ferredoxin]. Its pathway is protein modification; protein lipoylation via endogenous pathway; protein N(6)-(lipoyl)lysine from octanoyl-[acyl-carrier-protein]: step 2/2. Functionally, catalyzes the radical-mediated insertion of two sulfur atoms into the C-6 and C-8 positions of the octanoyl moiety bound to the lipoyl domains of lipoate-dependent enzymes, thereby converting the octanoylated domains into lipoylated derivatives. This is Lipoyl synthase from Leifsonia xyli subsp. xyli (strain CTCB07).